The chain runs to 635 residues: Dual specificity protein kinase zak2 (635 aa).

2 Protein kinase domains span residues 9 to 249 (WEEI…HRLI) and 299 to 585 (NKDD…QIYF). Residues 15–23 (IGSCNSKSR) and Lys45 contribute to the ATP site. Asp124 functions as the Proton acceptor in the catalytic mechanism. ATP-binding positions include 305-313 (GGDGFFSVV) and Lys326. The Proton acceptor role is filled by Asp427.

It in the N-terminal section; belongs to the protein kinase superfamily. Ser/Thr protein kinase family. In the C-terminal section; belongs to the protein kinase superfamily. TKL Tyr protein kinase family. Post-translationally, C-terminal tyrosine kinase domain is capable of autophosphorylation, in vitro. As to expression, zakA and zak2 are coexpressed in prestalk cell population, zakA is enriched in pstB populations and zak1 in pstA populations. ZakA and zak2 are coexpressed in prespore cells, zakA expression levels are 10 fold higher than zak2.

The enzyme catalyses L-seryl-[protein] + ATP = O-phospho-L-seryl-[protein] + ADP + H(+). It catalyses the reaction L-threonyl-[protein] + ATP = O-phospho-L-threonyl-[protein] + ADP + H(+). It carries out the reaction L-tyrosyl-[protein] + ATP = O-phospho-L-tyrosyl-[protein] + ADP + H(+). Its function is as follows. Positive regulator of gsk3/gskA activity required for cell pattern formation and a downstream effector of carC. The kinases, gsk3/gskA, zakA and zak2, form part of a signaling pathway that responds to extracellular cyclic AMP. The pathway has a role in transcriptional regulation; required to direct prespore/spore fates during development. Zak2 negatively regulates prestalk differentiation by regulating expression of ecmA. Phosphorylates Y-214 of gsk3/gskA, in vitro. The sequence is that of Dual specificity protein kinase zak2 (zak2) from Dictyostelium discoideum (Social amoeba).